Here is a 192-residue protein sequence, read N- to C-terminus: Xanthine phosphoribosyltransferase (192 aa).

Xanthine-binding residues include leucine 20 and asparagine 27. Alanine 128 to alanine 132 contacts 5-phospho-alpha-D-ribose 1-diphosphate. Position 156 (lysine 156) interacts with xanthine.

This sequence belongs to the purine/pyrimidine phosphoribosyltransferase family. Xpt subfamily. Homodimer.

It is found in the cytoplasm. The catalysed reaction is XMP + diphosphate = xanthine + 5-phospho-alpha-D-ribose 1-diphosphate. It functions in the pathway purine metabolism; XMP biosynthesis via salvage pathway; XMP from xanthine: step 1/1. Converts the preformed base xanthine, a product of nucleic acid breakdown, to xanthosine 5'-monophosphate (XMP), so it can be reused for RNA or DNA synthesis. This is Xanthine phosphoribosyltransferase from Agathobacter rectalis (strain ATCC 33656 / DSM 3377 / JCM 17463 / KCTC 5835 / VPI 0990) (Eubacterium rectale).